A 243-amino-acid polypeptide reads, in one-letter code: MGRKFEVRKVAMAKTAGAKTKVYSKYGKEIYMVAKNGGTDPQANLSLRRLIDKAKKDQVPSHVIDKAIDKAAGGAGEDFTPARYEGFGPGGCMVIVDCLTDNNNRTITDVRNCFTKTNSKIGVTGTVSHMFDHQAVFSFPGDDEDAVLEVLMEADVDVTEVECEEGVITVFAPHTEYFKTRTALTDNNPELEFDADEITFVPQTETVVTGEDVATFDKFMDMLEDCDDVQDVYHNAVVEREGE.

The protein belongs to the TACO1 family.

It is found in the cytoplasm. The protein is Probable transcriptional regulatory protein Patl_0550 of Pseudoalteromonas atlantica (strain T6c / ATCC BAA-1087).